The following is a 282-amino-acid chain: D-alanine aminotransferase (282 aa).

Y32 contacts substrate. R51 lines the pyridoxal 5'-phosphate pocket. Substrate-binding residues include R99 and H101. Residue K146 is the Proton acceptor of the active site. The residue at position 146 (K146) is an N6-(pyridoxal phosphate)lysine. Residue E178 participates in pyridoxal 5'-phosphate binding.

This sequence belongs to the class-IV pyridoxal-phosphate-dependent aminotransferase family. Homodimer. It depends on pyridoxal 5'-phosphate as a cofactor.

The enzyme catalyses D-alanine + 2-oxoglutarate = D-glutamate + pyruvate. Functionally, acts on the D-isomers of alanine, leucine, aspartate, glutamate, aminobutyrate, norvaline and asparagine. The enzyme transfers an amino group from a substrate D-amino acid to the pyridoxal phosphate cofactor to form pyridoxamine and an alpha-keto acid in the first half-reaction. The second half-reaction is the reverse of the first, transferring the amino group from the pyridoxamine to a second alpha-keto acid to form the product D-amino acid via a ping-pong mechanism. This is an important process in the formation of D-alanine and D-glutamate, which are essential bacterial cell wall components. In Staphylococcus epidermidis (strain ATCC 35984 / DSM 28319 / BCRC 17069 / CCUG 31568 / BM 3577 / RP62A), this protein is D-alanine aminotransferase (dat).